The chain runs to 172 residues: Shikimate kinase (172 aa).

An ATP-binding site is contributed by 14-19 (GAGKST). Ser18 lines the Mg(2+) pocket. Asp36, Arg60, and Gly82 together coordinate substrate. Arg120 lines the ATP pocket. Arg140 serves as a coordination point for substrate. Gln157 is an ATP binding site.

Belongs to the shikimate kinase family. As to quaternary structure, monomer. It depends on Mg(2+) as a cofactor.

It localises to the cytoplasm. It carries out the reaction shikimate + ATP = 3-phosphoshikimate + ADP + H(+). The protein operates within metabolic intermediate biosynthesis; chorismate biosynthesis; chorismate from D-erythrose 4-phosphate and phosphoenolpyruvate: step 5/7. Its function is as follows. Catalyzes the specific phosphorylation of the 3-hydroxyl group of shikimic acid using ATP as a cosubstrate. The polypeptide is Shikimate kinase (Aeromonas salmonicida (strain A449)).